The following is a 359-amino-acid chain: Membrane-bound lytic murein transglycosylase C (359 aa).

Residues 1 to 16 (MKKYLALALIAPLLIS) form the signal peptide. Cysteine 17 is lipidated: N-palmitoyl cysteine. Cysteine 17 is lipidated: S-diacylglycerol cysteine.

This sequence belongs to the transglycosylase Slt family.

The protein resides in the cell outer membrane. The enzyme catalyses Exolytic cleavage of the (1-&gt;4)-beta-glycosidic linkage between N-acetylmuramic acid (MurNAc) and N-acetylglucosamine (GlcNAc) residues in peptidoglycan, from either the reducing or the non-reducing ends of the peptidoglycan chains, with concomitant formation of a 1,6-anhydrobond in the MurNAc residue.. Its function is as follows. Murein-degrading enzyme. May play a role in recycling of muropeptides during cell elongation and/or cell division. The chain is Membrane-bound lytic murein transglycosylase C from Escherichia coli O139:H28 (strain E24377A / ETEC).